Reading from the N-terminus, the 380-residue chain is MAPNLRKSHPLLKMVNNSLIDLPAPSNISAWWNFGSLLGICLMTQILTGLLLAMHYTADTTLAFSSVAHTCRNVQYGWLIRNLHANGASFFFICIYLHIGRGFYYGSYLYKETWNTGVMLLLTLMATAFVGYVLPWGQMSFWGATVITNLFSAIPYIGQTLVEWAWGGFSVDNPTLTRFFALHFLLPFVIAGLTLIHLTFLHESGSNNPLGIVSNCDKIPFHPYFTLKDILGFMFMLLPLTTLALFSPNLLGDPENFTPANPLITPPHIKPEWYFLFAYAILRSIPNKLGGVLALAASVLILFLVPFLHKAKQRTMTFRPLSQLLFWVLVANLLILTWVGSQPVEHPFIIIGQLASLTYFTILLILFPTIGALENKMLNY.

The next 4 membrane-spanning stretches (helical) occupy residues 34–54 (FGSL…LLAM), 78–99 (WLIR…YLHI), 114–134 (WNTG…GYVL), and 179–199 (FFAL…IHLT). Heme b is bound by residues histidine 84 and histidine 98. Heme b contacts are provided by histidine 183 and histidine 197. Residue histidine 202 coordinates a ubiquinone. A run of 4 helical transmembrane segments spans residues 227-247 (LKDI…ALFS), 289-309 (LGGV…PFLH), 321-341 (LSQL…WVGS), and 348-368 (FIII…ILFP).

Belongs to the cytochrome b family. In terms of assembly, the cytochrome bc1 complex contains 11 subunits: 3 respiratory subunits (MT-CYB, CYC1 and UQCRFS1), 2 core proteins (UQCRC1 and UQCRC2) and 6 low-molecular weight proteins (UQCRH/QCR6, UQCRB/QCR7, UQCRQ/QCR8, UQCR10/QCR9, UQCR11/QCR10 and a cleavage product of UQCRFS1). This cytochrome bc1 complex then forms a dimer. The cofactor is heme b.

It localises to the mitochondrion inner membrane. In terms of biological role, component of the ubiquinol-cytochrome c reductase complex (complex III or cytochrome b-c1 complex) that is part of the mitochondrial respiratory chain. The b-c1 complex mediates electron transfer from ubiquinol to cytochrome c. Contributes to the generation of a proton gradient across the mitochondrial membrane that is then used for ATP synthesis. The protein is Cytochrome b (MT-CYB) of Pterodroma hypoleuca (Bonin petrel).